Consider the following 311-residue polypeptide: Malate dehydrogenase (311 aa).

NAD(+) contacts are provided by residues 7–13 (GAAGGIG) and Asp34. Residues Arg81 and Arg87 each coordinate substrate. NAD(+)-binding positions include Asn94 and 117–119 (ITN). Positions 119 and 153 each coordinate substrate. His177 functions as the Proton acceptor in the catalytic mechanism. Met227 is an NAD(+) binding site.

It belongs to the LDH/MDH superfamily. MDH type 1 family. Homodimer.

It catalyses the reaction (S)-malate + NAD(+) = oxaloacetate + NADH + H(+). Functionally, catalyzes the reversible oxidation of malate to oxaloacetate. The sequence is that of Malate dehydrogenase from Haemophilus influenzae (strain PittGG).